The primary structure comprises 398 residues: tRNA (guanine-N(7)-)-methyltransferase (398 aa).

The S-adenosyl-L-methionine site is built by E124, E149, and D176. A substrate-binding site is contributed by D232.

This sequence belongs to the class I-like SAM-binding methyltransferase superfamily. TrmB family.

The catalysed reaction is guanosine(46) in tRNA + S-adenosyl-L-methionine = N(7)-methylguanosine(46) in tRNA + S-adenosyl-L-homocysteine. Its pathway is tRNA modification; N(7)-methylguanine-tRNA biosynthesis. Catalyzes the formation of N(7)-methylguanine at position 46 (m7G46) in tRNA. The protein is tRNA (guanine-N(7)-)-methyltransferase of Helicobacter acinonychis (strain Sheeba).